A 538-amino-acid polypeptide reads, in one-letter code: Prickle planar cell polarity protein 3-A (538 aa).

In terms of domain architecture, PET spans 66–175 (SGSQRDSLCE…CVRPVSGTMS (110 aa)). LIM zinc-binding domains are found at residues 177 to 241 (TVCQ…ELKR), 242 to 302 (PRCL…LYAQ), and 305 to 366 (DSCG…NATP). Positions 369–378 (SFSPSQTDLS) are enriched in polar residues. Disordered regions lie at residues 369-398 (SFSP…DGDS), 433-463 (RGAP…TRVT), and 475-538 (SVSL…CLLS). A compositionally biased stretch (basic and acidic residues) spans 435–449 (APKEFSRECPNRRSL). Residues 451 to 463 (DLNSHTRTPTRVT) are compositionally biased toward polar residues. 2 stretches are compositionally biased toward low complexity: residues 475–488 (SVSL…SSSS) and 514–523 (APPTHAPTST).

It belongs to the prickle / espinas / testin family. Interacts with vangl2 via its C-terminus. The vangl2-dependent membrane recruitment of prickle3 is a prerequisite for its polarization. Interacts with wtip. Wtip is involved in the recruitment of prickle3 to the basal body. In terms of tissue distribution, predominantly expressed in the epidermal ectoderm.

The protein localises to the cytoplasm. It localises to the cell membrane. Its subcellular location is the mitochondrion. In terms of biological role, involved in the planar cell polarity (PCP) pathway that is essential for the polarization of epithelial cells during morphogenetic processes, including gastrulation and neurulation. PCP is maintained by two molecular modules, the global and the core modules. Proteins of the core module include the proteins Frizzled (Fz), Disheveled (Dsh), Van Gogh (Vang), Prickle (Pk), Flamingo (Fmi, Celsr) and Diego (Dgo). The core module proteins develop subcellular asymmetry, accumulating in two groups on opposite sides of epithelial cells. Distinct proximal (Vang, Pk and Fmi) and distal (Fz, Dsh, Dgo and Fmi) complexes segregate to opposite sides of the cell, where they interact with the opposite complex in the neighboring cell at or near the adherents junctions. Directional information to orient polarization with respect to the tissue axes is provided by the global module which involves Wnt proteins. Involved in the organization of the basal body. Involved in cilia growth and positioning. Required for proper assembly, stability, and function of mitochondrial membrane ATP synthase (mitochondrial complex V). In Xenopus laevis (African clawed frog), this protein is Prickle planar cell polarity protein 3-A (prickle3-a).